We begin with the raw amino-acid sequence, 741 residues long: uncharacterized protein (741 aa).

Polar residues predominate over residues 1–17 (MDSNTNENNSHASSNER). Positions 1-50 (MDSNTNENNSHASSNERQSSEGHDDYLNRNPNSEATEGEEGTHPTTGTQP) are disordered. Residues 18–27 (QSSEGHDDYL) are compositionally biased toward basic and acidic residues. The RING-type 1; degenerate zinc finger occupies 107–150 (CPICYDDMNENDEKQATKMPCGHIFGKNCLQKWLENHCTCPLCR). Polar residues-rich tracts occupy residues 177–193 (GNQG…SNGV), 252–263 (PDSNTSTPTTRS), and 277–302 (NASS…NAFF). Disordered stretches follow at residues 177–214 (GNQG…RTGV), 238–387 (SATN…NTNR), 500–543 (QPAV…PGIT), 561–619 (ENRM…TPTH), 638–688 (STPS…PQCQ), and 713–741 (RCQQ…EEHK). A compositionally biased stretch (low complexity) spans 316-332 (TSNLTSNSGSMTNSTST). Polar residues-rich tracts occupy residues 333–344 (DLPTSNLPSQNA) and 357–386 (PPNL…ANTN). 3 stretches are compositionally biased toward polar residues: residues 563–586 (RMNQ…SINV), 604–619 (ENSS…TPTH), and 652–661 (SKVSSGTSTP). The RING-type 2; degenerate zinc finger occupies 687 to 736 (CQLEDQGICDPNDRFVHFECGHSVHERCQQSTSNSENQMDEEIGECPKCR). Positions 731–741 (ECPKCRNEEHK) are enriched in basic and acidic residues.

It localises to the nucleus. This is an uncharacterized protein from Schizosaccharomyces pombe (strain 972 / ATCC 24843) (Fission yeast).